The chain runs to 181 residues: ATP synthase subunit delta (181 aa).

It belongs to the ATPase delta chain family. As to quaternary structure, F-type ATPases have 2 components, F(1) - the catalytic core - and F(0) - the membrane proton channel. F(1) has five subunits: alpha(3), beta(3), gamma(1), delta(1), epsilon(1). F(0) has three main subunits: a(1), b(2) and c(10-14). The alpha and beta chains form an alternating ring which encloses part of the gamma chain. F(1) is attached to F(0) by a central stalk formed by the gamma and epsilon chains, while a peripheral stalk is formed by the delta and b chains.

It is found in the cell membrane. In terms of biological role, f(1)F(0) ATP synthase produces ATP from ADP in the presence of a proton or sodium gradient. F-type ATPases consist of two structural domains, F(1) containing the extramembraneous catalytic core and F(0) containing the membrane proton channel, linked together by a central stalk and a peripheral stalk. During catalysis, ATP synthesis in the catalytic domain of F(1) is coupled via a rotary mechanism of the central stalk subunits to proton translocation. Its function is as follows. This protein is part of the stalk that links CF(0) to CF(1). It either transmits conformational changes from CF(0) to CF(1) or is implicated in proton conduction. This is ATP synthase subunit delta from Bacillus pumilus (strain SAFR-032).